The primary structure comprises 232 residues: Small ribosomal subunit protein uS3 (232 aa).

The KH type-2 domain occupies 39–107 (VRQFLTKELA…PAQINIAEVR (69 aa)).

The protein belongs to the universal ribosomal protein uS3 family. Part of the 30S ribosomal subunit. Forms a tight complex with proteins S10 and S14.

In terms of biological role, binds the lower part of the 30S subunit head. Binds mRNA in the 70S ribosome, positioning it for translation. This chain is Small ribosomal subunit protein uS3, found in Yersinia pseudotuberculosis serotype O:1b (strain IP 31758).